Here is a 359-residue protein sequence, read N- to C-terminus: AA9 family lytic polysaccharide monooxygenase C (359 aa).

Positions 1–16 are cleaved as a signal peptide; sequence MKTGSILAALVASASA. Residues His17 and His99 each coordinate Cu(2+). 2 disulfides stabilise this stretch: Cys55/Cys185 and Cys155/Cys243. The O2 site is built by His171 and Gln180. Tyr182 lines the Cu(2+) pocket. Asn189 and Asn284 each carry an N-linked (GlcNAc...) asparagine glycan. A disordered region spans residues 244 to 320; it reads PAGGSGGSSP…NPQPTNGGNS (77 aa). A compositionally biased stretch (low complexity) spans 251–296; it reads SSPAPATTASTPKPTSASAPKPVSTTASTPKPTNGSGSGTGAAHST. The segment covering 307-319 has biased composition (polar residues); that stretch reads TKASNPQPTNGGN. The CBM1 domain maps to 323 to 358; it reads RAAALYGQCGGKGWTGPTSCASGTCKFSNDWYSQCL.

It belongs to the polysaccharide monooxygenase AA9 family. Cu(2+) is required as a cofactor.

It is found in the secreted. The enzyme catalyses [(1-&gt;4)-beta-D-glucosyl]n+m + reduced acceptor + O2 = 4-dehydro-beta-D-glucosyl-[(1-&gt;4)-beta-D-glucosyl]n-1 + [(1-&gt;4)-beta-D-glucosyl]m + acceptor + H2O.. Its activity is regulated as follows. Activity in inhibited by excessive amounts of H(2)O(2). Functionally, lytic polysaccharide monooxygenase (LPMO) that depolymerizes crystalline and amorphous polysaccharides via the oxidation of scissile alpha- or beta-(1-4)-glycosidic bonds, yielding C4 oxidation products. Catalysis by LPMOs requires the reduction of the active-site copper from Cu(II) to Cu(I) by a reducing agent and H(2)O(2) or O(2) as a cosubstrate. Degrades various hemicelluloses, in particular xyloglucan. Active on tamarind xyloglucan and konjac glucomannan. Acts on the glucose backbone of xyloglucan, accepting various substitutions (xylose, galactose) in almost allpositions. In contrast to all previously characterized LPMOs, which are active only on polysaccharides, is able to cleave soluble cello-oligosaccharides as short as a tetramer. The cello-oligosaccharide products released by this enzyme contain a C4 gemdiol/keto group at the non-reducing end. Binds to the inner wood cell wall layer and consumes enzymatically generated H(2)O(2). This chain is AA9 family lytic polysaccharide monooxygenase C (gh61-3), found in Neurospora crassa (strain ATCC 24698 / 74-OR23-1A / CBS 708.71 / DSM 1257 / FGSC 987).